A 62-amino-acid chain; its full sequence is UPF0434 protein ABO_2103 (62 aa).

It belongs to the UPF0434 family.

This Alcanivorax borkumensis (strain ATCC 700651 / DSM 11573 / NCIMB 13689 / SK2) protein is UPF0434 protein ABO_2103.